A 396-amino-acid polypeptide reads, in one-letter code: Elongation factor Tu (396 aa).

The tr-type G domain maps to 11-205; that stretch reads KPHVNIGTIG…TVDEYIPTPE (195 aa). The interval 20–27 is G1; it reads GHVDHGKT. Residue 20–27 coordinates GTP; it reads GHVDHGKT. Thr-27 is a Mg(2+) binding site. Residues 61–65 are G2; sequence GITIN. The G3 stretch occupies residues 82–85; sequence DAPG. GTP-binding positions include 82–86 and 137–140; these read DAPGH and NKVD. The G4 stretch occupies residues 137 to 140; that stretch reads NKVD. Residues 175-177 are G5; the sequence is SAL.

This sequence belongs to the TRAFAC class translation factor GTPase superfamily. Classic translation factor GTPase family. EF-Tu/EF-1A subfamily. Monomer.

The protein resides in the cytoplasm. It catalyses the reaction GTP + H2O = GDP + phosphate + H(+). Its function is as follows. GTP hydrolase that promotes the GTP-dependent binding of aminoacyl-tRNA to the A-site of ribosomes during protein biosynthesis. This Lactobacillus gasseri (strain ATCC 33323 / DSM 20243 / BCRC 14619 / CIP 102991 / JCM 1131 / KCTC 3163 / NCIMB 11718 / NCTC 13722 / AM63) protein is Elongation factor Tu.